Consider the following 403-residue polypeptide: NADH-quinone oxidoreductase subunit D (403 aa).

It belongs to the complex I 49 kDa subunit family. NDH-1 is composed of 14 different subunits. Subunits NuoB, C, D, E, F, and G constitute the peripheral sector of the complex.

The protein localises to the cell inner membrane. The enzyme catalyses a quinone + NADH + 5 H(+)(in) = a quinol + NAD(+) + 4 H(+)(out). Its function is as follows. NDH-1 shuttles electrons from NADH, via FMN and iron-sulfur (Fe-S) centers, to quinones in the respiratory chain. The immediate electron acceptor for the enzyme in this species is believed to be ubiquinone. Couples the redox reaction to proton translocation (for every two electrons transferred, four hydrogen ions are translocated across the cytoplasmic membrane), and thus conserves the redox energy in a proton gradient. This chain is NADH-quinone oxidoreductase subunit D, found in Ruegeria sp. (strain TM1040) (Silicibacter sp.).